Consider the following 417-residue polypeptide: Caveolae-associated protein 2 (417 aa).

Residues 1-42 form a disordered region; the sequence is MGEDAAQAEKFQHPNTDMLQEKPSNPSPMPSSTPSPSLNLGS. Gly-2 carries the N-acetylglycine modification. An interaction with CAVIN1 region spans residues 2–168; that stretch reads GEDAAQAEKF…IFQEESEIPA (167 aa). Residues Ser-27, Ser-35, Ser-37, and Ser-51 each carry the phosphoserine modification. 2 coiled-coil regions span residues 61-87 and 126-267; these read LLDKLVNMLDAVRENQHNMEQRQINLE and RAVR…VERR. The leucine-zipper stretch occupies residues 62 to 100; that stretch reads LDKLVNMLDAVRENQHNMEQRQINLEGSVKGIQNDLTKL. Thr-195 carries the phosphothreonine modification. Disordered regions lie at residues 198–242 and 256–381; these read NVDL…DSLK and KLGT…ALQQ. 3 positions are modified to phosphoserine: Ser-202, Ser-203, and Ser-217. Residues 202–218 are compositionally biased toward acidic residues; it reads SSDDELPGDEEALEDSA. A compositionally biased stretch (basic and acidic residues) spans 219-242; sequence EEKMEESRAEKIKRSSLKKVDSLK. Over residues 274–286 the composition is skewed to polar residues; that stretch reads LTPNHQKASSGKS. Residues Ser-282, Ser-283, Ser-286, Ser-287, Ser-292, and Ser-295 each carry the phosphoserine modification. The span at 302 to 320 shows a compositional bias: basic and acidic residues; it reads REGESSAENETKLEEQVQD. A phosphoserine mark is found at Ser-326, Ser-335, Ser-358, and Ser-362. The segment covering 354–365 has biased composition (polar residues); the sequence is RGNNSGVGSNAD. Thr-367 bears the Phosphothreonine mark. Residues 367 to 376 show a composition bias toward acidic residues; sequence TIEEDEEEES. Phosphotyrosine is present on Tyr-387. Phosphoserine is present on residues Ser-389 and Ser-395.

It belongs to the CAVIN family. Component of the CAVIN complex composed of CAVIN1, CAVIN2, CAVIN3 and CAVIN. Interacts with CAVIN4; this augments the transactivation of NPPA by CAVIN4. Binds to PRKCA in the presence of phosphatidylserine. Interacts with CAVIN1 and CAV3. Post-translationally, the N-terminus is blocked. In terms of processing, phosphorylated on Ser residues.

It is found in the cytoplasm. It localises to the cytosol. Its subcellular location is the membrane. The protein localises to the caveola. Its function is as follows. Plays an important role in caveolar biogenesis and morphology. Regulates caveolae morphology by inducing membrane curvature within caveolae. Plays a role in caveola formation in a tissue-specific manner. Required for the formation of caveolae in the lung and fat endothelia but not in the heart endothelia. Negatively regulates the size or stability of CAVIN complexes in the lung endothelial cells. May play a role in targeting PRKCA to caveolae. The chain is Caveolae-associated protein 2 from Rattus norvegicus (Rat).